The chain runs to 762 residues: Cellulose synthase-like protein H2 (762 aa).

A compositionally biased stretch (low complexity) spans 1 to 15 (MAVVAAAAATGSTTR). The interval 1–39 (MAVVAAAAATGSTTRSGGGGGEGTRSGRKKPPPPPLQER) is disordered. Transmembrane regions (helical) follow at residues 47–67 (AWAW…LLAL) and 81–101 (GVWR…ALNV). Active-site residues include Asp-180 and Asp-470. The next 6 membrane-spanning stretches (helical) occupy residues 541–561 (LAYL…CYGL), 582–602 (FSVP…EYMA), 619–639 (IISV…SLGL), 673–693 (LPVF…VTVG), 708–728 (APGI…FPFV), and 739–759 (GIPW…VTFC).

The protein belongs to the glycosyltransferase 2 family. Plant cellulose synthase-like H subfamily.

The protein resides in the golgi apparatus membrane. Thought to be a Golgi-localized beta-glycan synthase that polymerize the backbones of noncellulosic polysaccharides (hemicelluloses) of plant cell wall. The polypeptide is Cellulose synthase-like protein H2 (CSLH2) (Oryza sativa subsp. japonica (Rice)).